The primary structure comprises 835 residues: Axin-1 (835 aa).

The segment at 16 to 60 is disordered; sequence LGSSFTEDAPRPPVPGEEGDLVSSDGRQYNHSFYSSKSDSLKNEA. A compositionally biased stretch (polar residues) spans 40–53; it reads DGRQYNHSFYSSKS. Positions 92-214 constitute an RGS domain; that stretch reads SLHSLLDDQD…LKSDIYLEYT (123 aa). Residues 318–349 are disordered; sequence ATSANDSEQQSMSSDADTLSLTDSSVDGVPPY. A compositionally biased stretch (low complexity) spans 328–344; sequence SMSSDADTLSLTDSSVD. Residues 351–436 are interaction with GSK3B; sequence YRKPHRREIH…DADISTGPSL (86 aa). Positions 437–512 are interaction with beta-catenin; the sequence is ANHRVPPAVH…SPDGLPAGKI (76 aa). Disordered stretches follow at residues 485–530 and 602–627; these read KTPG…QARQ and GYSS…FEMR. Over residues 616-627 the composition is skewed to basic and acidic residues; that stretch reads RKGEDGRNFEMR. Positions 753 to 835 constitute a DIX domain; sequence CENITVAYYF…KIIGKVEKVD (83 aa).

In terms of assembly, homodimer. Interacts with dixdc1. Interacts with hwa; leading to promote the tankyrase-mediated degradation of axin1. Post-translationally, ADP-ribosylated by tankyrase tnks and tnks2. Poly-ADP-ribosylated protein is recognized by rnf146, followed by ubiquitination at 'Lys-48' and subsequent activation of the Wnt signaling pathway. Ubiquitinated by rnf146 when poly-ADP-ribosylated, leading to its degradation and subsequent activation of the Wnt signaling pathway.

The protein localises to the cytoplasm. The protein resides in the nucleus. It localises to the membrane. It is found in the cell membrane. In terms of biological role, component of the beta-catenin destruction complex required for regulating ctnnb1 levels through phosphorylation and ubiquitination, and modulating Wnt-signaling. Controls dorsoventral patterning via two opposing effects: down-regulates ctnnb1 to inhibit the Wnt signaling pathway and ventralize embryos, but also dorsalizes embryos by activating a Wnt-independent JNK signaling pathway. This Danio rerio (Zebrafish) protein is Axin-1 (axin1).